Consider the following 402-residue polypeptide: Nodal homolog 4-A (402 aa).

A signal peptide spans 1–18; that stretch reads MHLYFYCLILLFVPGGNS. Positions 19–278 are excised as a propeptide; the sequence is LGINSYLKHM…TIAHTRRHRR (260 aa). N-linked (GlcNAc...) asparagine glycosylation is found at Asn-37, Asn-238, and Asn-340. 3 disulfides stabilise this stretch: Cys-302–Cys-368, Cys-331–Cys-399, and Cys-335–Cys-401.

It belongs to the TGF-beta family. As to quaternary structure, homodimer; disulfide-linked. As to expression, during blastula stages, expressed in the endoderm at a higher level dorsally than ventrally. Expressed in the deep cells of the Spemann organizer at the gastrula stage. Expressed in the notochord (a derivative of the organizer) and neural tube during the neural stages.

The protein localises to the secreted. Functionally, cooperation and regulatory loops of multiple nodals are essential for mesendoderm patterning in early embryos. Plays a role in mesoderm formation and may be required for neural development. The protein is Nodal homolog 4-A (nodal4-a) of Xenopus laevis (African clawed frog).